The following is a 392-amino-acid chain: 26S proteasome regulatory subunit 8 homolog (392 aa).

Position 176 to 183 (176 to 183) interacts with ATP; it reads GPPGTGKT.

This sequence belongs to the AAA ATPase family. As to quaternary structure, the 26S proteasome consists of a 20S proteasome core and two 19S regulatory subunits. The 20S proteasome core is composed of 28 subunits that are arranged in four stacked rings, resulting in a barrel-shaped structure. The two end rings are each formed by seven alpha subunits, and the two central rings are each formed by seven beta subunits. The catalytic chamber with the active sites is on the inside of the barrel.

The protein localises to the cytoplasm. It localises to the nucleus. Its function is as follows. Acts as a regulatory subunit of the 26S proteasome which degrades poly-ubiquitinated proteins in the cytoplasm and in the nucleus. It is essential for the regulated turnover of proteins and for the removal of misfolded proteins. The proteasome is a multicatalytic proteinase complex that is characterized by its ability to cleave peptides with Arg, Phe, Tyr, Leu, and Glu adjacent to the leaving group at neutral or slightly basic pH. The sequence is that of 26S proteasome regulatory subunit 8 homolog (RPT6) from Encephalitozoon cuniculi (strain GB-M1) (Microsporidian parasite).